A 308-amino-acid chain; its full sequence is Protein translocase subunit SecF (308 aa).

6 helical membrane-spanning segments follow: residues 28 to 48 (SIILSLISFIWIGIYKFNFGI), 140 to 160 (IEAGAMAMLFSFLAIMVYIWV), 164 to 184 (WYFGLGILIALVHDVILALGF), 194 to 214 (LSTIAAVLTIIGYSVNDSVVI), 246 to 266 (ILTVITTLLANLALILFGGEA), and 272 to 292 (VLVFFGIIAGTYSSIFISAPI).

Belongs to the SecD/SecF family. SecF subfamily. Forms a complex with SecD. Part of the essential Sec protein translocation apparatus which comprises SecA, SecYEG and auxiliary proteins SecDF-YajC and YidC.

The protein localises to the cell inner membrane. Functionally, part of the Sec protein translocase complex. Interacts with the SecYEG preprotein conducting channel. SecDF uses the proton motive force (PMF) to complete protein translocation after the ATP-dependent function of SecA. The polypeptide is Protein translocase subunit SecF (Rickettsia felis (strain ATCC VR-1525 / URRWXCal2) (Rickettsia azadi)).